The chain runs to 262 residues: MRKIKSLALLAVAALVIGCSSGSKDVEQASVNELYTKGTTSLQEGSYSEAIRYLKATTERFPGSVYQEQAMLDLIYANYKTQDYTQVLLMVDSFLHQFTQSPNQAYAVYMAGLTNAATGDNFIQDFFGIDRATRETTSMRTAFSNFQNLVRVFPNSPYSQDALARMAYIKDALARHELEIAKFYAKRKAWVAVANRVVGMLKQYPDTKATYEGLFLMQEAYEKMGLTALANDTQKIIDANKDKTFAPIEKPNEPDLKVPAVK.

The first 18 residues, methionine 1 to glycine 18, serve as a signal peptide directing secretion. Residue cysteine 19 is the site of N-palmitoyl cysteine attachment. A lipid anchor (S-diacylglycerol cysteine) is attached at cysteine 19.

It belongs to the BamD family. Part of the Bam complex.

The protein localises to the cell outer membrane. Part of the outer membrane protein assembly complex, which is involved in assembly and insertion of beta-barrel proteins into the outer membrane. This Haemophilus influenzae (strain ATCC 51907 / DSM 11121 / KW20 / Rd) protein is Outer membrane protein assembly factor BamD.